A 300-amino-acid chain; its full sequence is Heme A synthase (300 aa).

Topologically, residues 1 to 8 (MLKEKNLK) are cytoplasmic. Residues 9–29 (WLSLFTTVLMLFVQIGGALVT) traverse the membrane as a helical segment. Topologically, residues 30–64 (KTGSADGCGSSWPLCHGKFVPTHIPKETLIELAHR) are extracellular. An intrachain disulfide couples Cys37 to Cys44. Glu60 is an active-site residue. His63 is a binding site for heme o. Residues 65–85 (GVSGLALLSVTWLVILSIKYI) traverse the membrane as a helical segment. Residues 86-92 (GHKKETK) are Cytoplasmic-facing. A helical transmembrane segment spans residues 93 to 113 (FLCYMSIGFIFAQALIGAAAV). At 114 to 123 (MWQQNGFVLA) the chain is on the extracellular side. A helical transmembrane segment spans residues 124 to 144 (LHFGISLISFSAVFLLTLLIF). His125 lines the heme o pocket. Residues 145–163 (EVDQKFDATKLILQPKLRR) lie on the Cytoplasmic side of the membrane. Residues 164 to 184 (HTIGLTSFIYFVIYSGALVRH) traverse the membrane as a helical segment. The Extracellular portion of the chain corresponds to 185-218 (EKASLACSSWPLCRKGAFILPQNFYEWVQMSHRT). An intrachain disulfide couples Cys191 to Cys197. Residue His216 participates in heme b binding. A helical transmembrane segment spans residues 219-239 (LAFILFIWLTYVAFHAMRNYA). The Cytoplasmic segment spans residues 240-249 (QYRVIKYGYM). A helical transmembrane segment spans residues 250 to 270 (IAFILICLQVTTGALTIFTAV). Over 271 to 275 (NLYIA) the chain is Extracellular. A helical transmembrane segment spans residues 276–296 (LLHALFITLLFGLLCYFILLI). Residue His278 participates in heme b binding. Residues 297–300 (SRAK) are Cytoplasmic-facing.

Belongs to the COX15/CtaA family. Type 1 subfamily. As to quaternary structure, interacts with CtaB. The cofactor is heme b.

The protein resides in the cell membrane. It catalyses the reaction Fe(II)-heme o + 2 A + H2O = Fe(II)-heme a + 2 AH2. The protein operates within porphyrin-containing compound metabolism; heme A biosynthesis; heme A from heme O: step 1/1. Functionally, catalyzes the conversion of heme O to heme A by two successive hydroxylations of the methyl group at C8. The first hydroxylation forms heme I, the second hydroxylation results in an unstable dihydroxymethyl group, which spontaneously dehydrates, resulting in the formyl group of heme A. This Macrococcus caseolyticus (strain JCSC5402) (Macrococcoides caseolyticum) protein is Heme A synthase.